Reading from the N-terminus, the 93-residue chain is Acylphosphatase (93 aa).

Residues 5 to 91 enclose the Acylphosphatase-like domain; that stretch reads RAHFLVKGFV…RGETTFRIRS (87 aa). Active-site residues include Arg-20 and Asn-38.

This sequence belongs to the acylphosphatase family.

The catalysed reaction is an acyl phosphate + H2O = a carboxylate + phosphate + H(+). In Moorella thermoacetica (strain ATCC 39073 / JCM 9320), this protein is Acylphosphatase (acyP).